Reading from the N-terminus, the 219-residue chain is Small ribosomal subunit protein uS3c (219 aa).

Residues 47-119 enclose the KH type-2 domain; that stretch reads VRKYVRTAEN…KFIISLAEVE (73 aa).

The protein belongs to the universal ribosomal protein uS3 family. Part of the 30S ribosomal subunit.

It is found in the plastid. It localises to the chloroplast. The chain is Small ribosomal subunit protein uS3c (rps3) from Staurastrum punctulatum (Green alga).